We begin with the raw amino-acid sequence, 176 residues long: Flavodoxin (176 aa).

Residues 4-165 form the Flavodoxin-like domain; the sequence is IGIFFGSDTG…RVEKWVKQVA (162 aa).

It belongs to the flavodoxin family. Requires FMN as cofactor.

Its function is as follows. Low-potential electron donor to a number of redox enzymes. This is Flavodoxin (fldA) from Klebsiella pneumoniae.